The sequence spans 93 residues: Small ribosomal subunit protein uS19 (93 aa).

It belongs to the universal ribosomal protein uS19 family.

In terms of biological role, protein S19 forms a complex with S13 that binds strongly to the 16S ribosomal RNA. This Alkaliphilus metalliredigens (strain QYMF) protein is Small ribosomal subunit protein uS19.